The chain runs to 72 residues: AGEECDCGSPANPCCDAATCKLRPGAQCAEGLCCDQCRFIKKGKICRRARGDNPDDRCTGQSADCPRNHFHA.

Positions 1-72 (AGEECDCGSP…ADCPRNHFHA (72 aa)) constitute a Disintegrin domain. Disulfide bonds link C5/C20, C7/C15, C14/C37, C28/C34, C33/C58, and C46/C65. The Cell attachment site signature appears at 50–52 (RGD).

It belongs to the venom metalloproteinase (M12B) family. P-II subfamily. P-IIa sub-subfamily. As to quaternary structure, monomer (disintegrin). Expressed by the venom gland.

Its subcellular location is the secreted. In terms of biological role, inhibits fibrinogen interaction with platelets. Acts by binding to alpha-IIb/beta-3 (ITGA2B/ITGB3) on the platelet surface and inhibits aggregation induced by ADP, thrombin, platelet-activating factor and collagen. The chain is Disintegrin basilicin from Crotalus basiliscus (Mexican west-coast rattlesnake).